We begin with the raw amino-acid sequence, 182 residues long: Crossover junction endodeoxyribonuclease RuvC (182 aa).

Catalysis depends on residues D7, E69, and D141. The Mg(2+) site is built by D7, E69, and D141.

This sequence belongs to the RuvC family. In terms of assembly, homodimer which binds Holliday junction (HJ) DNA. The HJ becomes 2-fold symmetrical on binding to RuvC with unstacked arms; it has a different conformation from HJ DNA in complex with RuvA. In the full resolvosome a probable DNA-RuvA(4)-RuvB(12)-RuvC(2) complex forms which resolves the HJ. The cofactor is Mg(2+).

It localises to the cytoplasm. The catalysed reaction is Endonucleolytic cleavage at a junction such as a reciprocal single-stranded crossover between two homologous DNA duplexes (Holliday junction).. Functionally, the RuvA-RuvB-RuvC complex processes Holliday junction (HJ) DNA during genetic recombination and DNA repair. Endonuclease that resolves HJ intermediates. Cleaves cruciform DNA by making single-stranded nicks across the HJ at symmetrical positions within the homologous arms, yielding a 5'-phosphate and a 3'-hydroxyl group; requires a central core of homology in the junction. The consensus cleavage sequence is 5'-(A/T)TT(C/G)-3'. Cleavage occurs on the 3'-side of the TT dinucleotide at the point of strand exchange. HJ branch migration catalyzed by RuvA-RuvB allows RuvC to scan DNA until it finds its consensus sequence, where it cleaves and resolves the cruciform DNA. The chain is Crossover junction endodeoxyribonuclease RuvC from Variovorax paradoxus (strain S110).